Here is a 259-residue protein sequence, read N- to C-terminus: Dihydroorotate dehydrogenase B (NAD(+)), electron transfer subunit (259 aa).

The 101-residue stretch at 2–102 (MQKQNMIVVN…LGPLGHGFPV (101 aa)) folds into the FAD-binding FR-type domain. Residues 53–56 (RPIS), 70–72 (LYR), and 77–78 (GT) contribute to the FAD site. [2Fe-2S] cluster-binding residues include Cys221, Cys226, Cys229, and Cys246.

The protein belongs to the PyrK family. Heterotetramer of 2 PyrK and 2 PyrD type B subunits. Requires [2Fe-2S] cluster as cofactor. It depends on FAD as a cofactor.

The protein operates within pyrimidine metabolism; UMP biosynthesis via de novo pathway; orotate from (S)-dihydroorotate (NAD(+) route): step 1/1. In terms of biological role, responsible for channeling the electrons from the oxidation of dihydroorotate from the FMN redox center in the PyrD type B subunit to the ultimate electron acceptor NAD(+). The protein is Dihydroorotate dehydrogenase B (NAD(+)), electron transfer subunit of Bacillus cereus (strain Q1).